Reading from the N-terminus, the 87-residue chain is Probable Fe(2+)-trafficking protein (87 aa).

It belongs to the Fe(2+)-trafficking protein family. In terms of assembly, monomer.

Could be a mediator in iron transactions between iron acquisition and iron-requiring processes, such as synthesis and/or repair of Fe-S clusters in biosynthetic enzymes. The protein is Probable Fe(2+)-trafficking protein of Buchnera aphidicola subsp. Baizongia pistaciae (strain Bp).